Consider the following 107-residue polypeptide: uncharacterized protein (107 aa).

The next 3 helical transmembrane spans lie at 20 to 40 (FISLISSSTSELPLFVVEVGI), 49 to 69 (PAILSILVLNALEVSSFISTV), and 86 to 106 (VVMLKILAFLLLEGIIIKLFL).

It is found in the membrane. This is an uncharacterized protein from Saccharomyces cerevisiae (strain ATCC 204508 / S288c) (Baker's yeast).